A 927-amino-acid polypeptide reads, in one-letter code: DNA polymerase alpha-binding protein (927 aa).

WD repeat units lie at residues 10-49, 134-173, 227-266, and 273-313; these read FDFG…EEPE, KIDE…PNKV, AANR…LQKT, and STKA…IHYT. Phosphoserine occurs at positions 377, 379, and 398. Phosphothreonine is present on residues Thr401 and Thr411. Residue Ser463 is modified to Phosphoserine. The WD 5 repeat unit spans residues 699-739; it reads GSDNTLLLLSKWRSPEESKWLPILDSNMEIWKMSGGKETTD.

The protein localises to the nucleus. In terms of biological role, accessory factor for DNA replication. It plays a role in accurately duplicating the genome in vivo. This Saccharomyces cerevisiae (strain ATCC 204508 / S288c) (Baker's yeast) protein is DNA polymerase alpha-binding protein (CTF4).